The following is an 894-amino-acid chain: Translation initiation factor IF-2 (894 aa).

Positions 52 to 301 (DRGAAPNKLT…RRPSTLTQGF (250 aa)) are disordered. The span at 68 to 82 (STLNIPSTGGKSKSV) shows a compositional bias: polar residues. Positions 107–154 (EQARREAEELAQHQVQRDAEEKAKRAAEDKAKREAAEQAKRVAAESDK) are enriched in basic and acidic residues. Positions 155–168 (LTNQQTNTMTKSPQ) are enriched in polar residues. Basic and acidic residues-rich tracts occupy residues 171–214 (EKAR…ERGG) and 237–254 (HAREAEDENDRKVEGDRR). The segment covering 255-269 (SRTRGGKATKQKKTS) has biased composition (basic residues). Positions 270 to 283 (RLSESKADREEARA) are enriched in basic and acidic residues. One can recognise a tr-type G domain in the interval 393–562 (SRAPVVTIMG…LLQAEVLELK (170 aa)). Positions 402-409 (GHVDHGKT) are G1. Residue 402-409 (GHVDHGKT) coordinates GTP. A G2 region spans residues 427-431 (GITQH). A G3 region spans residues 448–451 (DTPG). Residues 448 to 452 (DTPGH) and 502 to 505 (NKID) each bind GTP. The tract at residues 502–505 (NKID) is G4. The tract at residues 538-540 (SAK) is G5.

The protein belongs to the TRAFAC class translation factor GTPase superfamily. Classic translation factor GTPase family. IF-2 subfamily.

It is found in the cytoplasm. In terms of biological role, one of the essential components for the initiation of protein synthesis. Protects formylmethionyl-tRNA from spontaneous hydrolysis and promotes its binding to the 30S ribosomal subunits. Also involved in the hydrolysis of GTP during the formation of the 70S ribosomal complex. In Sodalis glossinidius (strain morsitans), this protein is Translation initiation factor IF-2.